The following is a 281-amino-acid chain: Acetylglutamate kinase (281 aa).

Substrate contacts are provided by residues 64-65 (GG), arginine 86, and asparagine 179.

Belongs to the acetylglutamate kinase family. ArgB subfamily.

It localises to the cytoplasm. The enzyme catalyses N-acetyl-L-glutamate + ATP = N-acetyl-L-glutamyl 5-phosphate + ADP. Its pathway is amino-acid biosynthesis; L-arginine biosynthesis; N(2)-acetyl-L-ornithine from L-glutamate: step 2/4. Its function is as follows. Catalyzes the ATP-dependent phosphorylation of N-acetyl-L-glutamate. This is Acetylglutamate kinase from Campylobacter curvus (strain 525.92).